The chain runs to 473 residues: MNKKLGHKDHFHFIGIGGIGMSAIAMALIKKGYSVSGSDLIQNKETKSLKTLGAIIFDSQIKKNIDFVISKFQDHTLNCVISSAIKDENEELCFCKKNNLSIKHRSEILAMIMNSYTSLSIAGSHGKTSTSTFLSTLLELCTHDSSSITGGIIPIYDSNAHIENTKYLVTEIDESDGTIKNYNSDIGIINNIDFDHCDHYSNIDEVLSSFKKFASNCQKLLINYDCKFTKNNFTSKNQWSIKESNNIAYSLIPNIINKDKTVGKYYEHGKFIDIINIPVPGLHNLSNITAAIAACRMVGVSFKEIKKNTESLKLPKKRFEFRGEINQRIIYDDYAHHPNEIKATIDLARLFIKDKNSSDREEKGRLIAIFQPHRFTRVKQFIHEFVKELSKADVIYVTNIFGAGEKNIDNIDSQLIANLIYKNNKNVTCLKDNYEINEKFFKLTKKNDFIINMGAGDCHNLWSILKNKNTLNN.

ATP is bound at residue 123–129 (GSHGKTS).

Belongs to the MurCDEF family.

It localises to the cytoplasm. The catalysed reaction is UDP-N-acetyl-alpha-D-muramate + L-alanine + ATP = UDP-N-acetyl-alpha-D-muramoyl-L-alanine + ADP + phosphate + H(+). It functions in the pathway cell wall biogenesis; peptidoglycan biosynthesis. Functionally, cell wall formation. This chain is UDP-N-acetylmuramate--L-alanine ligase, found in Prochlorococcus marinus subsp. pastoris (strain CCMP1986 / NIES-2087 / MED4).